The primary structure comprises 341 residues: MSVPIPGIKDISKLKFFYGFKYLWNPTVYNKIFDKLDLTKTYKHPEELKVLDLYPGVGIQSAIFYNKYCPRQYSLLEKRSSLYKFLNAKFEGSPLQILKRDPYDWSTYSNLIDEERIFVPEVQSSDHINDKFLTVANVTGEGSEGLIMQWLSCIGNKNWLYRFGKVKMLLWMPSTTARKLLARPGMHSRSKCSVVREAFTDTKLIAISDANELKGFDSQCIEEWDPILFSAAEIWPTKGKPIALVEMDPIDFDFDVDNWDYVTRHLMILKRTPLNTVMDSLGHGGQQYFNSRITDKDLLKKCPIDLTNDEFIYLTKLFMEWPFKPDILMDFVDMYQTEHSG.

S-adenosyl-L-methionine-binding residues include Leu-23, Glu-77, Asp-101, and Asn-137.

Belongs to the class I-like SAM-binding methyltransferase superfamily. rRNA adenine N(6)-methyltransferase family.

It is found in the mitochondrion intermembrane space. Mitochondrial transcription factor that confers selective promoter recognition on the core subunit of the yeast mitochondrial RNA polymerase. Interacts with DNA in a non-specific manner. This is Mitochondrial transcription factor 1 (MTF1) from Saccharomyces cerevisiae (strain ATCC 204508 / S288c) (Baker's yeast).